Here is a 320-residue protein sequence, read N- to C-terminus: rRNA 2'-O-methyltransferase fibrillarin 2 (320 aa).

The disordered stretch occupies residues 1–79 (MRPPLTGSGG…GRGGMKGGSK (79 aa)). 2 stretches are compositionally biased toward gly residues: residues 7–44 (GSGG…GGRG) and 57–76 (PPRG…GMKG). Residues 167–168 (TT), 186–187 (EF), 211–212 (DA), and 231–234 (DVAQ) each bind S-adenosyl-L-methionine.

It belongs to the methyltransferase superfamily. Fibrillarin family. Component of box C/D small nucleolar ribonucleoprotein (snoRNP) particles. Interacts with groundnut rosette virus long-distance movement protein; this interaction is required for virus long-distance movement protein transiting through host Cajal body and nucleolus, relocalization of fibrillarin to the cytoplasm, and in presence of viral RNA, leads to the formation of stable RNPs. Interacts (via GAR domain) with the hordeivirus TGB1 movement protein (via the first 82 amino acid residues). Interacts with PRMT11 and PRMT12. Interacts with MED19A. In terms of processing, methylated by PRMT11 and PRMT12. As to expression, expressed in roots and flowers. Expressed in leaves and stems. Expression levels decrease during aging.

It is found in the nucleus. The protein resides in the nucleolus. The catalysed reaction is a ribonucleotide in rRNA + S-adenosyl-L-methionine = a 2'-O-methylribonucleotide in rRNA + S-adenosyl-L-homocysteine + H(+). It carries out the reaction L-glutaminyl-[histone H2A] + S-adenosyl-L-methionine = N(5)-methyl-L-glutaminyl-[histone H2A] + S-adenosyl-L-homocysteine + H(+). Functionally, S-adenosyl-L-methionine-dependent methyltransferase that has the ability to methylate both RNAs and proteins. Involved in pre-rRNA processing. Utilizes the methyl donor S-adenosyl-L-methionine to catalyze the site-specific 2'-hydroxyl methylation of ribose moieties in pre-ribosomal RNA. Site specificity is provided by a guide RNA that base pairs with the substrate. Methylation occurs at a characteristic distance from the sequence involved in base pairing with the guide RNA. Also acts as a protein methyltransferase by mediating methylation of 'Gln-105' of histone H2A (H2AQ105me), a modification that impairs binding of the FACT complex and is specifically present at 35S ribosomal DNA locus. Acts as a negative regulator of expression of immune responsive genes, including pathogenesis-related gene 1 (PR1), and of resistance against bacterial pathogen. Binds to MED19A, a positive regulator of PR1 expression, to repress the activator activity of MED19A. In response to the bacterial pathogen-associated molecular pattern (PAMP) elf18, associates with the long non-coding RNA (lncRNA) ELENA1 (At4g16355), and releases its repression of MED19A. Possesses ribonuclease activity toward rRNA in vitro. Binds phosphoinositides, phospholipids and phosphatidic acid in vitro. This Arabidopsis thaliana (Mouse-ear cress) protein is rRNA 2'-O-methyltransferase fibrillarin 2.